A 235-amino-acid polypeptide reads, in one-letter code: Small ribosomal subunit protein eS6 (235 aa).

A phosphoserine mark is found at S229 and S230.

The protein belongs to the eukaryotic ribosomal protein eS6 family. In terms of processing, phosphorylated.

The chain is Small ribosomal subunit protein eS6 (RPS6) from Kluyveromyces marxianus (Yeast).